Reading from the N-terminus, the 139-residue chain is MLQPKRTKFRKAHKGRIHGKAKGGMHLDFGAFGLKAQEPARITARQIEAARRAITRHMKRAGRVWIRIFPDVPVSSKPTEVRMGKGKGAPEYWAARVKPGRIMFEIDGVPLAVAEEAMRLGAAKLPIKTRFVARPGEQA.

The protein belongs to the universal ribosomal protein uL16 family. In terms of assembly, part of the 50S ribosomal subunit.

Binds 23S rRNA and is also seen to make contacts with the A and possibly P site tRNAs. The polypeptide is Large ribosomal subunit protein uL16 (Parvibaculum lavamentivorans (strain DS-1 / DSM 13023 / NCIMB 13966)).